We begin with the raw amino-acid sequence, 330 residues long: DNA-directed RNA polymerase subunit alpha (330 aa).

Residues 1–232 (MAILAFQKPE…SHFSLFAENK (232 aa)) form an alpha N-terminal domain (alpha-NTD) region. The tract at residues 248–330 (EDSLHMRQLL…DISKYKLDKD (83 aa)) is alpha C-terminal domain (alpha-CTD).

This sequence belongs to the RNA polymerase alpha chain family. As to quaternary structure, homodimer. The RNAP catalytic core consists of 2 alpha, 1 beta, 1 beta' and 1 omega subunit. When a sigma factor is associated with the core the holoenzyme is formed, which can initiate transcription.

It catalyses the reaction RNA(n) + a ribonucleoside 5'-triphosphate = RNA(n+1) + diphosphate. DNA-dependent RNA polymerase catalyzes the transcription of DNA into RNA using the four ribonucleoside triphosphates as substrates. The chain is DNA-directed RNA polymerase subunit alpha from Porphyromonas gingivalis (strain ATCC BAA-308 / W83).